The primary structure comprises 131 residues: UPF0102 protein CYA_0708 (131 aa).

This sequence belongs to the UPF0102 family.

This is UPF0102 protein CYA_0708 from Synechococcus sp. (strain JA-3-3Ab) (Cyanobacteria bacterium Yellowstone A-Prime).